Consider the following 453-residue polypeptide: Methionine aminopeptidase 2-1 (453 aa).

A compositionally biased stretch (basic and acidic residues) spans 1 to 12; that stretch reads MGSKTPDGHRQS. The interval 1–101 is disordered; sequence MGSKTPDGHR…TTPPRVPLST (101 aa). The span at 46-57 shows a compositional bias: acidic residues; sequence GEDDDDDDENEE. Basic residues predominate over residues 67–82; sequence KKKKRKKSKKKNKKSK. H210 contributes to the substrate binding site. 3 residues coordinate a divalent metal cation: D231, D242, and H306. Residue H314 coordinates substrate. Positions 339 and 434 each coordinate a divalent metal cation.

It belongs to the peptidase M24A family. Methionine aminopeptidase eukaryotic type 2 subfamily. Co(2+) serves as cofactor. The cofactor is Zn(2+). Requires Mn(2+) as cofactor. It depends on Fe(2+) as a cofactor.

It is found in the cytoplasm. It carries out the reaction Release of N-terminal amino acids, preferentially methionine, from peptides and arylamides.. Its function is as follows. Cotranslationally removes the N-terminal methionine from nascent proteins. The N-terminal methionine is often cleaved when the second residue in the primary sequence is small and uncharged (Met-Ala-, Cys, Gly, Pro, Ser, Thr, or Val). The chain is Methionine aminopeptidase 2-1 from Aspergillus terreus (strain NIH 2624 / FGSC A1156).